The chain runs to 880 residues: DNA mismatch repair protein MutS (880 aa).

An ATP-binding site is contributed by 605-612 (GPNMSGKS). The segment at 790-829 (QETAAVPSRGVEPPAPVIEPTPAKEQTPVKEQTTPLVEES) is disordered. Residues 818–829 (VKEQTTPLVEES) show a composition bias toward polar residues.

Belongs to the DNA mismatch repair MutS family.

This protein is involved in the repair of mismatches in DNA. It is possible that it carries out the mismatch recognition step. This protein has a weak ATPase activity. This chain is DNA mismatch repair protein MutS, found in Limosilactobacillus fermentum (strain NBRC 3956 / LMG 18251) (Lactobacillus fermentum).